The chain runs to 288 residues: HTH-type transcriptional repressor CarA (288 aa).

The HTH merR-type domain maps to 2–73 (TLRIRTIARM…VSEAIAQVKT (72 aa)). A DNA-binding region (H-T-H motif) is located at residues 5-24 (IRTIARMTGIREATLRAWER). The B12-binding domain maps to 162–288 (GPRALLACPS…NQVRNAQNRP (127 aa)).

Belongs to the CarA/CarH B12-binding photoregulator family. As to quaternary structure, forms homodimers or oligomers. Interacts with CarS.

Its activity is regulated as follows. Binds cobalamin (vitamin B12), but cobalamin is not required for CarA activity. Interaction with CarS prevents binding to DNA. Functionally, negative regulator of the carB operon in the dark. Binds specifically to the CarA operator, in the region around the carB promoter, which blocks access to the RNA polymerase. The sequence is that of HTH-type transcriptional repressor CarA (carA) from Myxococcus xanthus.